Here is a 257-residue protein sequence, read N- to C-terminus: Pimeloyl-[acyl-carrier protein] methyl ester esterase (257 aa).

In terms of domain architecture, AB hydrolase-1 spans 16-242 (LVLLHGWGLN…AAHAPFISHP (227 aa)). Residues Trp-22, 82 to 83 (SL), and 143 to 147 (FLGLQ) each bind substrate. Ser-82 (nucleophile) is an active-site residue. Active-site residues include Asp-207 and His-235. Substrate is bound at residue His-235.

Belongs to the AB hydrolase superfamily. Carboxylesterase BioH family. In terms of assembly, monomer.

It localises to the cytoplasm. The catalysed reaction is 6-carboxyhexanoyl-[ACP] methyl ester + H2O = 6-carboxyhexanoyl-[ACP] + methanol + H(+). Its pathway is cofactor biosynthesis; biotin biosynthesis. In terms of biological role, the physiological role of BioH is to remove the methyl group introduced by BioC when the pimeloyl moiety is complete. It allows to synthesize pimeloyl-ACP via the fatty acid synthetic pathway through the hydrolysis of the ester bonds of pimeloyl-ACP esters. In Sodalis glossinidius (strain morsitans), this protein is Pimeloyl-[acyl-carrier protein] methyl ester esterase.